The chain runs to 311 residues: DNA-directed RNA polymerase subunit alpha (311 aa).

An alpha N-terminal domain (alpha-NTD) region spans residues 1-228 (MQYQIERIDH…ELFQPLATVT (228 aa)). An alpha C-terminal domain (alpha-CTD) region spans residues 239–311 (PSPEAQIPLE…ISIPQSRTSV (73 aa)).

Belongs to the RNA polymerase alpha chain family. In cyanobacteria the RNAP catalytic core is composed of 2 alpha, 1 beta, 1 beta', 1 gamma and 1 omega subunit. When a sigma factor is associated with the core the holoenzyme is formed, which can initiate transcription.

It carries out the reaction RNA(n) + a ribonucleoside 5'-triphosphate = RNA(n+1) + diphosphate. In terms of biological role, DNA-dependent RNA polymerase catalyzes the transcription of DNA into RNA using the four ribonucleoside triphosphates as substrates. In Prochlorococcus marinus (strain MIT 9312), this protein is DNA-directed RNA polymerase subunit alpha.